Here is a 249-residue protein sequence, read N- to C-terminus: MESIVVSNWKMHFSFSEACNYLNLITSLHGNLNIAKVIFAVPNLYLSGLKLKFNDTYHFSAQDVSMITESSGPYTGEISASMLKNLNVNYAIVGHSERRLLFYEDANTIASKVRNCINNAIVPIVCIGEPIEARKNKTYLQYIAQQLSSISFSFTKNIIIAYEPVWSIGSCMVPTIDDIYEVVTMIREIQNRYIPHNIENSVKIVYGGSVSANNINQILTAGIDGVLIGKASLKLESLTTIIKTVQGLD.

8–10 (NWK) provides a ligand contact to substrate. Residue His-95 is the Electrophile of the active site. The active-site Proton acceptor is the Glu-163. Substrate contacts are provided by Gly-169 and Ser-209.

It belongs to the triosephosphate isomerase family. As to quaternary structure, homodimer.

It is found in the cytoplasm. It catalyses the reaction D-glyceraldehyde 3-phosphate = dihydroxyacetone phosphate. It functions in the pathway carbohydrate biosynthesis; gluconeogenesis. It participates in carbohydrate degradation; glycolysis; D-glyceraldehyde 3-phosphate from glycerone phosphate: step 1/1. Its function is as follows. Involved in the gluconeogenesis. Catalyzes stereospecifically the conversion of dihydroxyacetone phosphate (DHAP) to D-glyceraldehyde-3-phosphate (G3P). The polypeptide is Triosephosphate isomerase (Orientia tsutsugamushi (strain Boryong) (Rickettsia tsutsugamushi)).